The chain runs to 695 residues: HIPL1 protein (695 aa).

Residues 1 to 23 (MKLHQFLVFLFLFLSCFALSSWA) form the signal peptide. N-linked (GlcNAc...) asparagine glycans are attached at residues asparagine 37, asparagine 67, asparagine 107, asparagine 113, asparagine 128, asparagine 151, asparagine 175, asparagine 190, asparagine 208, asparagine 337, asparagine 429, asparagine 511, asparagine 527, asparagine 641, and asparagine 648. Serine 665 carries the GPI-anchor amidated serine lipid modification. The propeptide at 666-695 (SSCYKHINGFHGSLVVLFVSLSLILLGLLN) is removed in mature form.

The protein belongs to the PQQ oxidoreductase GdhB family. The cofactor is pyrroloquinoline quinone.

The protein localises to the cell membrane. This Arabidopsis thaliana (Mouse-ear cress) protein is HIPL1 protein (HIPL1).